Reading from the N-terminus, the 64-residue chain is Prokaryotic ubiquitin-like protein Pup (64 aa).

A disordered region spans residues Met-1–Asp-37. Residues Thr-21–Tyr-58 form an ARC ATPase binding region. Residues Gly-25–Glu-52 adopt a coiled-coil conformation. The residue at position 64 (Gln-64) is a Deamidated glutamine. An Isoglutamyl lysine isopeptide (Gln-Lys) (interchain with K-? in acceptor proteins) cross-link involves residue Gln-64.

This sequence belongs to the prokaryotic ubiquitin-like protein family. In terms of assembly, strongly interacts with the proteasome-associated ATPase ARC through a hydrophobic interface; the interacting region of Pup lies in its C-terminal half. There is one Pup binding site per ARC hexamer ring. Post-translationally, is modified by deamidation of its C-terminal glutamine to glutamate by the deamidase Dop, a prerequisite to the subsequent pupylation process.

Its pathway is protein degradation; proteasomal Pup-dependent pathway. Functionally, protein modifier that is covalently attached to lysine residues of substrate proteins, thereby targeting them for proteasomal degradation. The tagging system is termed pupylation. The sequence is that of Prokaryotic ubiquitin-like protein Pup from Mycobacterium marinum (strain ATCC BAA-535 / M).